A 391-amino-acid polypeptide reads, in one-letter code: 3-ketoacyl-CoA thiolase (391 aa).

The active-site Acyl-thioester intermediate is Cys95. Catalysis depends on proton acceptor residues His347 and Cys377.

This sequence belongs to the thiolase-like superfamily. Thiolase family. As to quaternary structure, heterotetramer of two alpha chains (FadB) and two beta chains (FadA).

The protein resides in the cytoplasm. It carries out the reaction an acyl-CoA + acetyl-CoA = a 3-oxoacyl-CoA + CoA. It functions in the pathway lipid metabolism; fatty acid beta-oxidation. In terms of biological role, catalyzes the final step of fatty acid oxidation in which acetyl-CoA is released and the CoA ester of a fatty acid two carbons shorter is formed. The chain is 3-ketoacyl-CoA thiolase from Vibrio parahaemolyticus serotype O3:K6 (strain RIMD 2210633).